We begin with the raw amino-acid sequence, 152 residues long: Succinate dehydrogenase [ubiquinone] cytochrome b small subunit B, mitochondrial (152 aa).

Residues 1 to 21 constitute a mitochondrion transit peptide; that stretch reads MATLLRVSSLCRANRASAFKS. Topologically, residues 22–56 are mitochondrial matrix; the sequence is LLIRPLPCLSQDLHMVQTSQIHTSPNHHAGSKAAS. The chain crosses the membrane as a helical span at residues 57-78; the sequence is MHWTGERALSVALLGLLPAAYL. The Mitochondrial intermembrane portion of the chain corresponds to 79 to 83; sequence YPGAA. A helical membrane pass occupies residues 84–104; the sequence is MDYSLAAALTLHGHWGLGQVV. His-95 is a binding site for heme b. Topologically, residues 105 to 113 are mitochondrial matrix; the sequence is TDYVHGETK. Tyr-107 contacts a ubiquinone. Residues 114–135 traverse the membrane as a helical segment; that stretch reads IKMANTSLFALSALTFAGLCYF. Over 136–152 the chain is Mitochondrial intermembrane; that stretch reads NYHDVGICKAVAMLWSL.

The protein belongs to the CybS family. As to quaternary structure, component of complex II composed of four subunits: the flavoprotein (FP) SDHA, iron-sulfur protein (IP) SDHB, and a cytochrome b560 composed of SDHC and SDHD.

The protein resides in the mitochondrion inner membrane. Its pathway is carbohydrate metabolism; tricarboxylic acid cycle. Membrane-anchoring subunit of succinate dehydrogenase (SDH) that is involved in complex II of the mitochondrial electron transport chain and is responsible for transferring electrons from succinate to ubiquinone (coenzyme Q). SDH also oxidizes malate to the non-canonical enol form of oxaloacetate, enol-oxaloacetate. Enol-oxaloacetate, which is a potent inhibitor of the succinate dehydrogenase activity, is further isomerized into keto-oxaloacetate. This is Succinate dehydrogenase [ubiquinone] cytochrome b small subunit B, mitochondrial (sdhd-b) from Xenopus laevis (African clawed frog).